The chain runs to 158 residues: Superoxide dismutase [Cu-Zn] (158 aa).

3 residues coordinate Cu cation: His46, His48, and His63. A disulfide bridge connects residues Cys57 and Cys149. Zn(2+) contacts are provided by His63, His71, His80, and Asp83. His120 provides a ligand contact to Cu cation.

This sequence belongs to the Cu-Zn superoxide dismutase family. Homodimer. It depends on Cu cation as a cofactor. Zn(2+) serves as cofactor.

The protein localises to the cytoplasm. It carries out the reaction 2 superoxide + 2 H(+) = H2O2 + O2. Functionally, destroys radicals which are normally produced within the cells and which are toxic to biological systems. The chain is Superoxide dismutase [Cu-Zn] (sod-1) from Onchocerca volvulus.